The sequence spans 627 residues: 1-deoxy-D-xylulose-5-phosphate synthase (627 aa).

Residues H80 and 121–123 (GHS) each bind thiamine diphosphate. D152 contacts Mg(2+). Thiamine diphosphate-binding positions include 153-154 (GA), N181, Y288, and E370. N181 is a Mg(2+) binding site.

It belongs to the transketolase family. DXPS subfamily. In terms of assembly, homodimer. It depends on Mg(2+) as a cofactor. Thiamine diphosphate is required as a cofactor.

It carries out the reaction D-glyceraldehyde 3-phosphate + pyruvate + H(+) = 1-deoxy-D-xylulose 5-phosphate + CO2. The protein operates within metabolic intermediate biosynthesis; 1-deoxy-D-xylulose 5-phosphate biosynthesis; 1-deoxy-D-xylulose 5-phosphate from D-glyceraldehyde 3-phosphate and pyruvate: step 1/1. Functionally, catalyzes the acyloin condensation reaction between C atoms 2 and 3 of pyruvate and glyceraldehyde 3-phosphate to yield 1-deoxy-D-xylulose-5-phosphate (DXP). This chain is 1-deoxy-D-xylulose-5-phosphate synthase, found in Vibrio atlanticus (strain LGP32) (Vibrio splendidus (strain Mel32)).